Reading from the N-terminus, the 318-residue chain is ADP-L-glycero-D-manno-heptose-6-epimerase (318 aa).

NADP(+)-binding positions include 10-11, 31-32, Lys-38, Lys-53, 76-80, and Asn-93; these read FI, DN, and QGACS. The Proton acceptor role is filled by Tyr-141. Position 145 (Lys-145) interacts with NADP(+). Residue Asn-172 coordinates substrate. NADP(+) contacts are provided by Val-173 and Lys-181. Catalysis depends on Lys-181, which acts as the Proton acceptor. Substrate is bound by residues Arg-183, His-190, 204 to 207, Arg-212, and Tyr-276; that span reads FEGS.

This sequence belongs to the NAD(P)-dependent epimerase/dehydratase family. HldD subfamily. In terms of assembly, homopentamer. Requires NADP(+) as cofactor.

The enzyme catalyses ADP-D-glycero-beta-D-manno-heptose = ADP-L-glycero-beta-D-manno-heptose. Its pathway is nucleotide-sugar biosynthesis; ADP-L-glycero-beta-D-manno-heptose biosynthesis; ADP-L-glycero-beta-D-manno-heptose from D-glycero-beta-D-manno-heptose 7-phosphate: step 4/4. In terms of biological role, catalyzes the interconversion between ADP-D-glycero-beta-D-manno-heptose and ADP-L-glycero-beta-D-manno-heptose via an epimerization at carbon 6 of the heptose. The protein is ADP-L-glycero-D-manno-heptose-6-epimerase of Brachyspira hyodysenteriae (strain ATCC 49526 / WA1).